Reading from the N-terminus, the 906-residue chain is Protein translocase subunit SecA (906 aa).

ATP contacts are provided by residues Q89, 107–111 (GEGKT), and D502. Zn(2+) is bound by residues C885, C887, C896, and H897.

This sequence belongs to the SecA family. As to quaternary structure, monomer and homodimer. Part of the essential Sec protein translocation apparatus which comprises SecA, SecYEG and auxiliary proteins SecDF-YajC and YidC. Requires Zn(2+) as cofactor.

Its subcellular location is the cell inner membrane. It localises to the cytoplasm. The enzyme catalyses ATP + H2O + cellular proteinSide 1 = ADP + phosphate + cellular proteinSide 2.. Its function is as follows. Part of the Sec protein translocase complex. Interacts with the SecYEG preprotein conducting channel. Has a central role in coupling the hydrolysis of ATP to the transfer of proteins into and across the cell membrane, serving both as a receptor for the preprotein-SecB complex and as an ATP-driven molecular motor driving the stepwise translocation of polypeptide chains across the membrane. The sequence is that of Protein translocase subunit SecA from Rhizobium rhizogenes (strain K84 / ATCC BAA-868) (Agrobacterium radiobacter).